Reading from the N-terminus, the 247-residue chain is Eukaryotic translation initiation factor 6 (247 aa).

Residues serine 174 and serine 175 each carry the phosphoserine; by CK1 modification.

Belongs to the eIF-6 family. In terms of assembly, monomer. Associates with the 60S ribosomal subunit. Phosphorylation at Ser-174 and Ser-175 promotes nuclear export.

Its subcellular location is the cytoplasm. The protein resides in the nucleus. The protein localises to the nucleolus. Its function is as follows. Binds to the 60S ribosomal subunit and prevents its association with the 40S ribosomal subunit to form the 80S initiation complex in the cytoplasm. Is also involved in ribosome biogenesis. Associates with pre-60S subunits in the nucleus and is involved in its nuclear export. The chain is Eukaryotic translation initiation factor 6 (tif6) from Talaromyces stipitatus (strain ATCC 10500 / CBS 375.48 / QM 6759 / NRRL 1006) (Penicillium stipitatum).